A 111-amino-acid polypeptide reads, in one-letter code: Small ubiquitin-related modifier 3 (111 aa).

The 78-residue stretch at 16-93 (AHVILKVKSQ…IDACRAMSGG (78 aa)) folds into the Ubiquitin-like domain. Residue glycine 93 forms a Glycyl lysine isopeptide (Gly-Lys) (interchain with K-? in acceptor proteins) linkage.

This sequence belongs to the ubiquitin family. SUMO subfamily. In terms of assembly, interacts with SAE2, SCE1, SIZ1 and MMS21. Covalently attached to a number of proteins. Interacts with NPR1; this interaction promotes NPR1 phosphorylation and triggers its sumoylation and subsequent degradation.

It localises to the nucleus. The protein resides in the cytoplasm. Functionally, ubiquitin-like protein which can be covalently attached to target lysines as a monomer. Does not seem to be involved in protein degradation and may function as an antagonist of ubiquitin in the degradation process. Promotes NPR1 sumoylation to activate defense gene expression and regulate its degradation. This Arabidopsis thaliana (Mouse-ear cress) protein is Small ubiquitin-related modifier 3.